Here is a 329-residue protein sequence, read N- to C-terminus: MSAELFENWLLKRARAEHSHIVLPEGDDDRILMAAHQLLDQDICDITILGDPVKIKERATELGLHLNTAYLVNPLTDPRLEEFAEQFAELRKSKSVTIDEAREIMKDISYFGTMMVHNGDADGMVSGAANTTAHTIKPSFQIIKTVPEASVVSSIFLMVLRGRLWAFGDCAVNPNPTAEQLGEIAVVSAKTAAQFGIDPRVAILSYSTGNSGGGSDVDRAIDALAEARRLNPELCVDGPLQFDAAVDPGVARKKMPDSDVAGQANVFIFPDLEAGNIGYKTAQRTGHALAVGPILQGLNKPVNDLSRGATVPDIVNTVAITAIQAGGRS.

The protein belongs to the phosphate acetyltransferase and butyryltransferase family.

It is found in the cytoplasm. The catalysed reaction is acetyl-CoA + phosphate = acetyl phosphate + CoA. It participates in metabolic intermediate biosynthesis; acetyl-CoA biosynthesis; acetyl-CoA from acetate: step 2/2. The sequence is that of Phosphate acetyltransferase (pta) from Corynebacterium glutamicum (strain ATCC 13032 / DSM 20300 / JCM 1318 / BCRC 11384 / CCUG 27702 / LMG 3730 / NBRC 12168 / NCIMB 10025 / NRRL B-2784 / 534).